Reading from the N-terminus, the 189-residue chain is Anthranilate synthase component 2 (189 aa).

The Glutamine amidotransferase type-1 domain maps to 1-189 (MILIIDNYDS…QLLKNFLDSD (189 aa)). 52–54 (GPG) is a binding site for L-glutamine. Catalysis depends on Cys79, which acts as the Nucleophile; for GATase activity. L-glutamine is bound by residues Gln83 and 129–130 (SL). Residues His169 and Glu171 contribute to the active site.

Tetramer of two components I and two components II.

Its subcellular location is the plastid. It localises to the chloroplast. It catalyses the reaction chorismate + L-glutamine = anthranilate + pyruvate + L-glutamate + H(+). It participates in amino-acid biosynthesis; L-tryptophan biosynthesis; L-tryptophan from chorismate: step 1/5. The protein is Anthranilate synthase component 2 (trpG) of Porphyra purpurea (Red seaweed).